A 156-amino-acid chain; its full sequence is Large ribosomal subunit protein uL22 (156 aa).

Belongs to the universal ribosomal protein uL22 family. Part of the 50S ribosomal subunit.

In terms of biological role, this protein binds specifically to 23S rRNA. It makes multiple contacts with different domains of the 23S rRNA in the assembled 50S subunit and ribosome. Its function is as follows. The globular domain of the protein is located near the polypeptide exit tunnel on the outside of the subunit, while an extended beta-hairpin is found that lines the wall of the exit tunnel in the center of the 70S ribosome. The protein is Large ribosomal subunit protein uL22 of Halobacterium salinarum (strain ATCC 700922 / JCM 11081 / NRC-1) (Halobacterium halobium).